The sequence spans 78 residues: Alpha-amylase inhibitor Haim-1 (78 aa).

Intrachain disulfides connect cysteine 11–cysteine 27 and cysteine 45–cysteine 72.

Functionally, inhibits mammalian alpha-amylases specifically but has no action on plant and microbial alpha-amylases. This chain is Alpha-amylase inhibitor Haim-1, found in Streptomyces griseosporeus.